The following is an 84-amino-acid chain: Small ribosomal subunit protein bS16 (84 aa).

The protein belongs to the bacterial ribosomal protein bS16 family.

The sequence is that of Small ribosomal subunit protein bS16 from Delftia acidovorans (strain DSM 14801 / SPH-1).